The primary structure comprises 66 residues: GRDAYIAQNYNCVYHCFRDDYCNGLCTENGADSGYCYLAGKYGHACWCINLPDDKPIRIPGKCHRR.

An LCN-type CS-alpha/beta domain is found at 2–64 (RDAYIAQNYN…KPIRIPGKCH (63 aa)). 4 disulfides stabilise this stretch: Cys-12–Cys-63, Cys-16–Cys-36, Cys-22–Cys-46, and Cys-26–Cys-48. Positions 65–66 (RR) are cleaved as a propeptide — removed by a carboxypeptidase.

In terms of tissue distribution, expressed by the venom gland.

The protein resides in the secreted. Functionally, alpha toxins bind voltage-independently at site-3 of sodium channels (Nav) and inhibit the inactivation of the activated channels, thereby blocking neuronal transmission. This toxin has a strong analgesic effect when administered to mice by intraperitoneal injection. This Olivierus martensii (Manchurian scorpion) protein is Neurotoxin BmK AGP-SYPU1.